The following is a 760-amino-acid chain: General transcription and DNA repair factor IIH helicase subunit XPD (760 aa).

In terms of domain architecture, Helicase ATP-binding spans 7 to 283 (GLLVYFPYDY…KETDEQRLRD (277 aa)). An ATP-binding site is contributed by 42 to 49 (MPSGTGKT). [4Fe-4S] cluster contacts are provided by C116, C134, C155, and C190. A DEAH box motif is present at residues 234–237 (DEAH). Positions 438–637 (MDASLAIKPV…TQSRILKARL (200 aa)) are mediates interaction with MMS19. The Nuclear localization signal signature appears at 682-695 (KRFARADKRGKLPR).

This sequence belongs to the helicase family. RAD3/XPD subfamily. As to quaternary structure, component of the 7-subunit TFIIH core complex composed of XPB/ERCC3, XPD/ERCC2, GTF2H1, GTF2H2, GTF2H3, GTF2H4 and GTF2H5, which is active in NER. The core complex associates with the 3-subunit CDK-activating kinase (CAK) module composed of CCNH/cyclin H, CDK7 and MNAT1 to form the 10-subunit holoenzyme (holo-TFIIH) active in transcription. The interaction with GTF2H2 results in the stimulation of the 5'--&gt;3' helicase activity. Component of the MMXD complex, which includes CIAO1, ERCC2, CIAO2B, MMS19 and SLC25A5. Interacts with CIAO1 and CIAO2B; the interaction WITH CIAO2B is direct. Interacts with ATF7IP. Interacts directly with MMS19. Part of TBP-based Pol II pre-initiation complex (PIC), in which Pol II core assembles with general transcription factors and other specific initiation factors including GTF2E1, GTF2E2, GTF2F1, GTF2F2, TCEA1, ERCC2, ERCC3, GTF2H2, GTF2H3, GTF2H4, GTF2H5, GTF2A1, GTF2A2, GTF2B and TBP; this large multi-subunit PIC complex mediates DNA unwinding and targets Pol II core to the transcription start site where the first phosphodiester bond forms. Mg(2+) is required as a cofactor. Requires [4Fe-4S] cluster as cofactor. In terms of processing, ISGylated.

The protein localises to the nucleus. Its subcellular location is the cytoplasm. The protein resides in the cytoskeleton. It is found in the spindle. It carries out the reaction Couples ATP hydrolysis with the unwinding of duplex DNA at the replication fork by translocating in the 5'-3' direction. This creates two antiparallel DNA single strands (ssDNA). The leading ssDNA polymer is the template for DNA polymerase III holoenzyme which synthesizes a continuous strand.. The catalysed reaction is ATP + H2O = ADP + phosphate + H(+). In terms of biological role, ATP-dependent 5'-3' DNA helicase. Component of the general transcription and DNA repair factor IIH (TFIIH) core complex which is involved in general and transcription-coupled nucleotide excision repair (NER) of damaged DNA. When complexed to CDK-activating kinase (CAK), involved in transcription by RNA polymerase II. In NER, TFIIH acts by opening DNA around the lesion to allow the excision of the damaged oligonucleotide and its replacement by a new DNA fragment. The ATP-dependent helicase activity of XPD/ERCC2 is required for DNA opening. In transcription, TFIIH has an essential role in transcription initiation. When the pre-initiation complex (PIC) has been established, TFIIH is required for promoter opening and promoter escape. Phosphorylation of the C-terminal tail (CTD) of the largest subunit of RNA polymerase II by the kinase module CAK controls the initiation of transcription. XPD/ERCC2 acts by forming a bridge between CAK and the core-TFIIH complex. Involved in the regulation of vitamin-D receptor activity. As part of the mitotic spindle-associated MMXD complex it plays a role in chromosome segregation. Might have a role in aging process and could play a causative role in the generation of skin cancers. In Cricetulus griseus (Chinese hamster), this protein is General transcription and DNA repair factor IIH helicase subunit XPD.